Reading from the N-terminus, the 391-residue chain is Formate-dependent phosphoribosylglycinamide formyltransferase (391 aa).

Residues 20 to 21 and E80 each bind N(1)-(5-phospho-beta-D-ribosyl)glycinamide; that span reads EL. Residues R112, K153, 158 to 163, 193 to 196, and E201 each bind ATP; these read SSGKGQ and EGFV. Residues 117-306 enclose the ATP-grasp domain; the sequence is RLAAETLGLP…EFALHVRAIL (190 aa). E265 and E277 together coordinate Mg(2+). Residues D284, K354, and 361–362 each bind N(1)-(5-phospho-beta-D-ribosyl)glycinamide; that span reads RR.

The protein belongs to the PurK/PurT family. Homodimer.

It carries out the reaction N(1)-(5-phospho-beta-D-ribosyl)glycinamide + formate + ATP = N(2)-formyl-N(1)-(5-phospho-beta-D-ribosyl)glycinamide + ADP + phosphate + H(+). It functions in the pathway purine metabolism; IMP biosynthesis via de novo pathway; N(2)-formyl-N(1)-(5-phospho-D-ribosyl)glycinamide from N(1)-(5-phospho-D-ribosyl)glycinamide (formate route): step 1/1. Functionally, involved in the de novo purine biosynthesis. Catalyzes the transfer of formate to 5-phospho-ribosyl-glycinamide (GAR), producing 5-phospho-ribosyl-N-formylglycinamide (FGAR). Formate is provided by PurU via hydrolysis of 10-formyl-tetrahydrofolate. This is Formate-dependent phosphoribosylglycinamide formyltransferase from Shewanella sp. (strain W3-18-1).